The sequence spans 241 residues: Antimicrobial ginkbilobin-2-like protein (241 aa).

The signal sequence occupies residues M1 to C23. Gnk2-homologous domains are found at residues D25–F127 and N133–F238. Disulfide bonds link C81–C90, C93–C118, C192–C201, and C204–C229. The N-linked (GlcNAc...) asparagine glycan is linked to N89.

This sequence belongs to the cysteine-rich repeat secretory protein family.

The protein localises to the secreted. Functionally, possesses antimicrobial activity toward the oomycete Phytophthora cinnamomi (ink disease agent), thus reducing its growth rate and confering an increased resistance to the plant. The protein is Antimicrobial ginkbilobin-2-like protein of Castanea crenata (Japanese chestnut).